Consider the following 37-residue polypeptide: Potassium channel toxin alpha-KTx 1.4 (37 aa).

3 disulfide bridges follow: C7–C28, C13–C33, and C17–C35.

It belongs to the short scorpion toxin superfamily. Potassium channel inhibitor family. Alpha-KTx 01 subfamily. Expressed by the venom gland.

The protein localises to the secreted. Its function is as follows. Blocks selectively the high conductance calcium-activated (maxi-K) potassium channels. This is Potassium channel toxin alpha-KTx 1.4 from Centruroides limbatus (Bark scorpion).